A 101-amino-acid chain; its full sequence is Small ribosomal subunit protein uS14 (101 aa).

Residues 53–72 (RDAAAVRVRNRDSHDGRPRG) form a disordered region. A compositionally biased stretch (basic and acidic residues) spans 61–70 (RNRDSHDGRP).

Belongs to the universal ribosomal protein uS14 family. In terms of assembly, part of the 30S ribosomal subunit. Contacts proteins S3 and S10.

Its function is as follows. Binds 16S rRNA, required for the assembly of 30S particles and may also be responsible for determining the conformation of the 16S rRNA at the A site. This chain is Small ribosomal subunit protein uS14, found in Corynebacterium glutamicum (strain ATCC 13032 / DSM 20300 / JCM 1318 / BCRC 11384 / CCUG 27702 / LMG 3730 / NBRC 12168 / NCIMB 10025 / NRRL B-2784 / 534).